Reading from the N-terminus, the 310-residue chain is Glutamyl-Q tRNA(Asp) synthetase (310 aa).

L-glutamate is bound by residues 8-12 and E44; that span reads RFAPS. The 'HIGH' region motif lies at 11–21; the sequence is PSPTGPLHLGS. Zn(2+) contacts are provided by C100, C102, Y123, and C127. L-glutamate contacts are provided by Y183 and R201. The 'KMSKS' region signature appears at 239 to 243; it reads KLSKQ. Position 242 (K242) interacts with ATP.

It belongs to the class-I aminoacyl-tRNA synthetase family. GluQ subfamily. It depends on Zn(2+) as a cofactor.

Functionally, catalyzes the tRNA-independent activation of glutamate in presence of ATP and the subsequent transfer of glutamate onto a tRNA(Asp). Glutamate is transferred on the 2-amino-5-(4,5-dihydroxy-2-cyclopenten-1-yl) moiety of the queuosine in the wobble position of the QUC anticodon. The polypeptide is Glutamyl-Q tRNA(Asp) synthetase (Cupriavidus metallidurans (strain ATCC 43123 / DSM 2839 / NBRC 102507 / CH34) (Ralstonia metallidurans)).